The chain runs to 391 residues: MSLNPRDVVIVDFGRTPMGRSKGGMHRNTRAEDMSAHLISKLLERNTKVDPAEVEDVIWGCVNQTLEQGWNIARMASLMTQIPHTSAGQTVSRLCGSSMSALHTAAQAIMTGNGDVFVVGGVEHMGHVSMMHGVDPNPHMSLYAAKASGMMGLTAEMLGKMHGITREQQDAFGVRSHQLAHKATVEGKFKDEIIPMQGYDENGFLKTFDYDETIRPETTLESLAALKPAFNPKGGTVTAGTSSQITDGASCMIVMSAQRAQDLGIQPLAVIRSMAVAGVDPAIMGYGPVPATQKALKRAGLGINDIDFFELNEAFAAQALPVLKDLKVLDKMNEKVNLHGGAIALGHPFGCSGARISGTLLNVMKQNGGTFGVATMCIGLGQGISTVFERV.

The active-site Acyl-thioester intermediate is the Cys-95. Catalysis depends on proton acceptor residues His-347 and Cys-377.

The protein belongs to the thiolase-like superfamily. Thiolase family. In terms of assembly, heterotetramer of two alpha chains (FadB) and two beta chains (FadA).

It is found in the cytoplasm. The enzyme catalyses an acyl-CoA + acetyl-CoA = a 3-oxoacyl-CoA + CoA. It functions in the pathway lipid metabolism; fatty acid beta-oxidation. In terms of biological role, catalyzes the final step of fatty acid oxidation in which acetyl-CoA is released and the CoA ester of a fatty acid two carbons shorter is formed. This is 3-ketoacyl-CoA thiolase from Pseudomonas fluorescens (strain Pf0-1).